We begin with the raw amino-acid sequence, 311 residues long: MLQNQEISKKEKYNIDKLQKRLRRNVGEAIADFNMIEEGDRIMVCLSGGKDSYTMLEILRNLQKSAPISFSLVAVNLDQKQPGFPEHILPAYLEQLGVEYKIVEENTYGIVKEKIPEGKTTCSLCSRLRRGILYRTATELGATKIALGHHRDDILQTLFLNMFYGGKMKGMPPKLMSDDGKHIVIRPLAYCREKDIERFSQAKGFPIIPCNLCGSQPNLQRQVIADMLRDWDKRYPGRIETMFSAMQNVVPSHLSDVNLFDFKGITHGSEVVDGGDLAFDREEIPLQPAGWQPEEEDARLDELRLNVVEVK.

The short motif at 47–52 (SGGKDS) is the PP-loop motif element. Positions 122, 125, and 213 each coordinate [4Fe-4S] cluster.

Belongs to the TtcA family. Homodimer. It depends on Mg(2+) as a cofactor. Requires [4Fe-4S] cluster as cofactor.

Its subcellular location is the cytoplasm. It carries out the reaction cytidine(32) in tRNA + S-sulfanyl-L-cysteinyl-[cysteine desulfurase] + AH2 + ATP = 2-thiocytidine(32) in tRNA + L-cysteinyl-[cysteine desulfurase] + A + AMP + diphosphate + H(+). Its pathway is tRNA modification. Functionally, catalyzes the ATP-dependent 2-thiolation of cytidine in position 32 of tRNA, to form 2-thiocytidine (s(2)C32). The sulfur atoms are provided by the cysteine/cysteine desulfurase (IscS) system. This is tRNA-cytidine(32) 2-sulfurtransferase from Klebsiella pneumoniae (strain 342).